The primary structure comprises 912 residues: Transcription factor bHLH140 (912 aa).

Residues 1–57 (MDDFNLRSENPNSSSTTSSSSSSFHRHKSETGNTKRSRSTSTLSTDPQSVAARDRRH) are disordered. The span at 13 to 23 (SSSTTSSSSSS) shows a compositional bias: low complexity. One can recognise a bHLH domain in the interval 43–92 (LSTDPQSVAARDRRHRISDRFKILQSMVPGGAKMDTVSMLDEAISYVKFL). An ATP-binding site is contributed by 234 to 241 (GPPGSGKS). A Macro domain is found at 511–690 (KAKASQKNID…KYKGSQDKAV (180 aa)). Residues 657–666 (PKRSSQTAVS) show a composition bias toward polar residues. The tract at residues 657-706 (PKRSSQTAVSDSGEDIKEDSERNKKYKGSQDKAVTNNLESESLEDTRGSG) is disordered. An HIT domain is found at 720–829 (LHSIAMHPER…SQDFNSDSLK (110 aa)). Residues 870–893 (LRCNRCRSAHPNIPKLKSHVRSCH) form a C2H2-type zinc finger.

Homodimer.

Its subcellular location is the nucleus. The chain is Transcription factor bHLH140 (BHLH140) from Arabidopsis thaliana (Mouse-ear cress).